Consider the following 482-residue polypeptide: Putative dipeptidase NECHADRAFT_87110 (482 aa).

The span at 1–21 (MADTQTPNLQNTAEGDANTSA) shows a compositional bias: polar residues. Positions 1-24 (MADTQTPNLQNTAEGDANTSAENE) are disordered. N-linked (GlcNAc...) asparagine glycosylation occurs at N18. A helical membrane pass occupies residues 41 to 61 (WLRYPFLVAGIALFLGPFSFF). Residues H90, D92, and E201 each coordinate Zn(2+). A disulfide bond links C141 and C230. A substrate-binding site is contributed by H228. Residues H272 and H293 each coordinate Zn(2+). The substrate site is built by R304 and D364.

The protein belongs to the metallo-dependent hydrolases superfamily. Peptidase M19 family. Requires Zn(2+) as cofactor.

The protein resides in the membrane. It carries out the reaction an L-aminoacyl-L-amino acid + H2O = 2 an L-alpha-amino acid. Functionally, hydrolyzes a wide range of dipeptides. The sequence is that of Putative dipeptidase NECHADRAFT_87110 from Fusarium vanettenii (strain ATCC MYA-4622 / CBS 123669 / FGSC 9596 / NRRL 45880 / 77-13-4) (Fusarium solani subsp. pisi).